The sequence spans 168 residues: Putative gustatory receptor clone PTE03 (168 aa).

Over 1–25 (TTVPKMLINLQKQNKAISYAGCITQ) the chain is Extracellular. C22 and C104 are disulfide-bonded. The helical transmembrane segment at 26–45 (LSFVLLFAGMENFLLAAMAY) threads the bilayer. Residues 46–67 (DRYVAICKPLRYTAIMKAHLCL) lie on the Cytoplasmic side of the membrane. The helical transmembrane segment at 68–88 (VMTLLSLCISIVDALLHGLMI) threads the bilayer. Residues 89-121 (LRLSFCTFLEIPHYFCELYQVIKLSCSDTLINN) are Extracellular-facing. The helical transmembrane segment at 122 to 143 (ILVYTMTSTLGGVPLGGIIFSY) threads the bilayer. The Cytoplasmic portion of the chain corresponds to 144–165 (FKIISSILRMPSSGSRHRAFST). Residues 166–168 (CGS) form a helical membrane-spanning segment.

The protein belongs to the G-protein coupled receptor 1 family. In terms of tissue distribution, tongue specific.

The protein localises to the cell membrane. Possible taste receptor. The protein is Putative gustatory receptor clone PTE03 (Olr1145) of Rattus norvegicus (Rat).